A 276-amino-acid chain; its full sequence is MDWILICKALILGVVEGLTEFLPVSSTGHLIVAGSFLNFNDSHAKTFDVVIQFGAILAVCWEYRQRIASIVSGLPSRPDARRFTLNVVIATIPAIALGLLFEKKIKAVLFSPVPVAFALVVGGAIILWAEARQRERREPPRVMSVDELTPLDALKVGIAQCFALIPGMSRSGSTIIGGMLFGLDRRVATEFSFFLAIPIIFGATLYETVKDWQAFTVDSLGLFVLGAVAAFVSAFVCVRWLLRYVASHDFTVFAWYRIAFGLFVLLVGYSGWLNWA.

A run of 7 helical transmembrane segments spans residues 4-24 (ILICKALILGVVEGLTEFLPV), 46-63 (TFDVVIQFGAILAVCWEY), 83-103 (FTLNVVIATIPAIALGLLFEK), 108-128 (VLFSPVPVAFALVVGGAIILW), 187-207 (VATEFSFFLAIPIIFGATLYE), 217-237 (VDSLGLFVLGAVAAFVSAFVC), and 252-272 (VFAWYRIAFGLFVLLVGYSGW).

This sequence belongs to the UppP family.

The protein localises to the cell inner membrane. The enzyme catalyses di-trans,octa-cis-undecaprenyl diphosphate + H2O = di-trans,octa-cis-undecaprenyl phosphate + phosphate + H(+). Catalyzes the dephosphorylation of undecaprenyl diphosphate (UPP). Confers resistance to bacitracin. The protein is Undecaprenyl-diphosphatase 1 of Burkholderia lata (strain ATCC 17760 / DSM 23089 / LMG 22485 / NCIMB 9086 / R18194 / 383).